A 195-amino-acid chain; its full sequence is uncharacterized protein (195 aa).

A signal peptide spans M1–A21. Residues N62 and N109 are each glycosylated (N-linked (GlcNAc...) asparagine). The disordered stretch occupies residues D119–H141.

It localises to the secreted. This is an uncharacterized protein from Arthroderma benhamiae (strain ATCC MYA-4681 / CBS 112371) (Trichophyton mentagrophytes).